A 317-amino-acid chain; its full sequence is MPADTRPAAIVLMGPTASGKSQLAIDIAKRWGGEVISVDSVLVYRGLDIGTAKPNAAMRASVPHHLIDICEPWETYSAADFAHDARAAIDMIVRRGALPILTGGTGLYFRALLAGLSDMPPAHPEIRAMIAAEAKRDSWAALHTRLAEVDAITAARIHATDPQRIQRALEVYLVSGQSMSDWQNQPPKQRLPLRVLKLVLAPTHRKVLHFRIAQRFKAMLDNGLLAEVNALRTHPSIHAMARPLDLPAMRAVGYRQCWEHLDGMYTAEMLYQRSVAATRQLAKRQLTWLRGELDALWFDPEHDQSRIEKVMEAFLNR.

14–21 (GPTASGKS) lines the ATP pocket. 16–21 (TASGKS) contributes to the substrate binding site. Interaction with substrate tRNA regions lie at residues 39–42 (DSVL) and 163–167 (QRIQR).

The protein belongs to the IPP transferase family. As to quaternary structure, monomer. Requires Mg(2+) as cofactor.

The catalysed reaction is adenosine(37) in tRNA + dimethylallyl diphosphate = N(6)-dimethylallyladenosine(37) in tRNA + diphosphate. In terms of biological role, catalyzes the transfer of a dimethylallyl group onto the adenine at position 37 in tRNAs that read codons beginning with uridine, leading to the formation of N6-(dimethylallyl)adenosine (i(6)A). This Xylella fastidiosa (strain M23) protein is tRNA dimethylallyltransferase.